Here is a 275-residue protein sequence, read N- to C-terminus: 2,3,4,5-tetrahydropyridine-2,6-dicarboxylate N-succinyltransferase (275 aa).

It belongs to the transferase hexapeptide repeat family.

It localises to the cytoplasm. It catalyses the reaction (S)-2,3,4,5-tetrahydrodipicolinate + succinyl-CoA + H2O = (S)-2-succinylamino-6-oxoheptanedioate + CoA. It participates in amino-acid biosynthesis; L-lysine biosynthesis via DAP pathway; LL-2,6-diaminopimelate from (S)-tetrahydrodipicolinate (succinylase route): step 1/3. This chain is 2,3,4,5-tetrahydropyridine-2,6-dicarboxylate N-succinyltransferase, found in Burkholderia multivorans (strain ATCC 17616 / 249).